The sequence spans 361 residues: MLYLLSELSGVFSPFNVFRYITFRTGGALFTAGLFVFWFGPWIISLLRLRQGKGQPIREDGPQTHLLTKRGTPTMGGLMILAGLLVAVFLWANPRNSYVWITVVVTLGFGAIGFYDDYLKVTKQSHKGFSGKFRLGLEALIAVAACVAVAEYSAPGLAYRLAFPVFKDAIVNLGLFWIFFASFVIVGAGNAVNITDGLDGLAIVPVMIAAATFGIIAYLVGNVIYASYLQVNYVPGTGELAVVCGALIGAGLGFLWFNAPPAQIFMGDTGSLALGGLLGTVAVATKHEIVLAVVGGLFVLEIASVIIQVASFKLTGKRVFRMAPIHHHFEQKGWKEPQVVIRFWIIAVVLALLGLATLKLR.

The next 10 membrane-spanning stretches (helical) occupy residues 27-47 (GALF…ISLL), 72-92 (TPTM…FLWA), 99-119 (VWIT…DDYL), 139-159 (ALIA…GLAY), 169-189 (AIVN…VGAG), 200-220 (GLAI…AYLV), 240-260 (LAVV…FNAP), 264-284 (IFMG…VAVA), 289-309 (IVLA…IIQV), and 338-358 (QVVI…LATL).

It belongs to the glycosyltransferase 4 family. MraY subfamily. The cofactor is Mg(2+).

The protein resides in the cell inner membrane. It carries out the reaction UDP-N-acetyl-alpha-D-muramoyl-L-alanyl-gamma-D-glutamyl-meso-2,6-diaminopimeloyl-D-alanyl-D-alanine + di-trans,octa-cis-undecaprenyl phosphate = di-trans,octa-cis-undecaprenyl diphospho-N-acetyl-alpha-D-muramoyl-L-alanyl-D-glutamyl-meso-2,6-diaminopimeloyl-D-alanyl-D-alanine + UMP. It functions in the pathway cell wall biogenesis; peptidoglycan biosynthesis. Catalyzes the initial step of the lipid cycle reactions in the biosynthesis of the cell wall peptidoglycan: transfers peptidoglycan precursor phospho-MurNAc-pentapeptide from UDP-MurNAc-pentapeptide onto the lipid carrier undecaprenyl phosphate, yielding undecaprenyl-pyrophosphoryl-MurNAc-pentapeptide, known as lipid I. The chain is Phospho-N-acetylmuramoyl-pentapeptide-transferase from Methylobacterium sp. (strain 4-46).